The primary structure comprises 192 residues: Putative 3-methyladenine DNA glycosylase (192 aa).

Belongs to the DNA glycosylase MPG family.

This chain is Putative 3-methyladenine DNA glycosylase, found in Bdellovibrio bacteriovorus (strain ATCC 15356 / DSM 50701 / NCIMB 9529 / HD100).